The sequence spans 299 residues: Phosphoribosylaminoimidazole-succinocarboxamide synthase (299 aa).

It belongs to the SAICAR synthetase family.

It catalyses the reaction 5-amino-1-(5-phospho-D-ribosyl)imidazole-4-carboxylate + L-aspartate + ATP = (2S)-2-[5-amino-1-(5-phospho-beta-D-ribosyl)imidazole-4-carboxamido]succinate + ADP + phosphate + 2 H(+). It functions in the pathway purine metabolism; IMP biosynthesis via de novo pathway; 5-amino-1-(5-phospho-D-ribosyl)imidazole-4-carboxamide from 5-amino-1-(5-phospho-D-ribosyl)imidazole-4-carboxylate: step 1/2. The chain is Phosphoribosylaminoimidazole-succinocarboxamide synthase from Streptomyces coelicolor (strain ATCC BAA-471 / A3(2) / M145).